Reading from the N-terminus, the 266-residue chain is MPSIHVSKCADPAIKLAHRIAEVVRSKPNCVLGLATGSTPIPVYQELARLHREEGLDFSQVRTFNLDEYAGLPPTHDQTYRFFMEEHLFSKVNIKPENVHFLNGMASDYEKECERYEQELKAIGPCDVWLLGIGHNGHIAFNEPGSPRDSRTRVVCLTQSTIDANARFFGNDKSKVPTKALSVGIATIMESREILLLATGESKREAVTKSVKGKCETHCPASFLHEHPHCRFYVDMDAGKVVDNTCCQATNQASCCGSTSCHAAKA.

Catalysis depends on D67, which acts as the Proton acceptor; for enolization step. N136 acts as the For ring-opening step in catalysis. Residue H138 is the Proton acceptor; for ring-opening step of the active site. Residue E143 is the For ring-opening step of the active site.

Belongs to the glucosamine/galactosamine-6-phosphate isomerase family. Homohexamer.

It localises to the cytoplasm. It carries out the reaction alpha-D-glucosamine 6-phosphate + H2O = beta-D-fructose 6-phosphate + NH4(+). Catalyzes the reversible conversion of alpha-D-glucosamine 6-phosphate (GlcN-6P) into beta-D-fructose 6-phosphate (Fru-6P) and ammonium ion, a regulatory reaction step in de novo uridine diphosphate-N-acetyl-alpha-D-glucosamine (UDP-GlcNAc) biosynthesis via hexosamine pathway. The polypeptide is Glucosamine-6-phosphate deaminase 1 (GPI1) (Giardia intestinalis (Giardia lamblia)).